The sequence spans 397 residues: Succinate--CoA ligase [ADP-forming] subunit beta (397 aa).

The 246-residue stretch at lysine 9–glutamate 254 folds into the ATP-grasp domain. Residues lysine 46, glycine 53 to glycine 55, glutamate 109, alanine 112, and glutamate 117 each bind ATP. Residues asparagine 209 and aspartate 223 each contribute to the Mg(2+) site. Residues asparagine 274 and glycine 331–methionine 333 contribute to the substrate site.

The protein belongs to the succinate/malate CoA ligase beta subunit family. Heterotetramer of two alpha and two beta subunits. It depends on Mg(2+) as a cofactor.

The enzyme catalyses succinate + ATP + CoA = succinyl-CoA + ADP + phosphate. It catalyses the reaction GTP + succinate + CoA = succinyl-CoA + GDP + phosphate. It functions in the pathway carbohydrate metabolism; tricarboxylic acid cycle; succinate from succinyl-CoA (ligase route): step 1/1. Its function is as follows. Succinyl-CoA synthetase functions in the citric acid cycle (TCA), coupling the hydrolysis of succinyl-CoA to the synthesis of either ATP or GTP and thus represents the only step of substrate-level phosphorylation in the TCA. The beta subunit provides nucleotide specificity of the enzyme and binds the substrate succinate, while the binding sites for coenzyme A and phosphate are found in the alpha subunit. The protein is Succinate--CoA ligase [ADP-forming] subunit beta of Chelativorans sp. (strain BNC1).